Consider the following 256-residue polypeptide: Thiazole synthase (256 aa).

The active-site Schiff-base intermediate with DXP is Lys-95. Residues Gly-156, 183-184, and 205-206 each bind 1-deoxy-D-xylulose 5-phosphate; these read AG and NT.

Belongs to the ThiG family. Homotetramer. Forms heterodimers with either ThiH or ThiS.

The protein resides in the cytoplasm. It carries out the reaction [ThiS sulfur-carrier protein]-C-terminal-Gly-aminoethanethioate + 2-iminoacetate + 1-deoxy-D-xylulose 5-phosphate = [ThiS sulfur-carrier protein]-C-terminal Gly-Gly + 2-[(2R,5Z)-2-carboxy-4-methylthiazol-5(2H)-ylidene]ethyl phosphate + 2 H2O + H(+). Its pathway is cofactor biosynthesis; thiamine diphosphate biosynthesis. Catalyzes the rearrangement of 1-deoxy-D-xylulose 5-phosphate (DXP) to produce the thiazole phosphate moiety of thiamine. Sulfur is provided by the thiocarboxylate moiety of the carrier protein ThiS. In vitro, sulfur can be provided by H(2)S. The protein is Thiazole synthase of Gluconacetobacter diazotrophicus (strain ATCC 49037 / DSM 5601 / CCUG 37298 / CIP 103539 / LMG 7603 / PAl5).